Reading from the N-terminus, the 117-residue chain is NADPH-dependent 7-cyano-7-deazaguanine reductase (117 aa).

Cys-31 (thioimide intermediate) is an active-site residue. Asp-38 serves as the catalytic Proton donor. Substrate contacts are provided by residues 53–55 and 72–73; these read IEL and YE.

This sequence belongs to the GTP cyclohydrolase I family. QueF type 1 subfamily.

The protein resides in the cytoplasm. The catalysed reaction is 7-aminomethyl-7-carbaguanine + 2 NADP(+) = 7-cyano-7-deazaguanine + 2 NADPH + 3 H(+). Its pathway is tRNA modification; tRNA-queuosine biosynthesis. Functionally, catalyzes the NADPH-dependent reduction of 7-cyano-7-deazaguanine (preQ0) to 7-aminomethyl-7-deazaguanine (preQ1). This Chlorobaculum tepidum (strain ATCC 49652 / DSM 12025 / NBRC 103806 / TLS) (Chlorobium tepidum) protein is NADPH-dependent 7-cyano-7-deazaguanine reductase.